Here is a 495-residue protein sequence, read N- to C-terminus: Neuronal acetylcholine receptor subunit beta-4 (495 aa).

Positions M1–C20 are cleaved as a signal peptide. Topologically, residues R21–T235 are extracellular. N-linked (GlcNAc...) asparagine glycosylation is found at N35, N92, N137, and N165. An intrachain disulfide couples C152 to C166. A helical membrane pass occupies residues I236–P256. The Cytoplasmic portion of the chain corresponds to S257–T264. Position 261 (E261) interacts with Na(+). The helical transmembrane segment at L265 to P285 threads the bilayer. Topologically, residues P286–Y297 are extracellular. A helical membrane pass occupies residues L298 to V318. At H319–R463 the chain is on the cytoplasmic side. A helical transmembrane segment spans residues L464–P484. The Extracellular segment spans residues L485 to L495.

Belongs to the ligand-gated ion channel (TC 1.A.9) family. Acetylcholine receptor (TC 1.A.9.1) subfamily. Beta-4/CHRNB4 sub-subfamily. In terms of assembly, neuronal AChR is composed of two different types of subunits: alpha and beta. CHRNB4/Beta-4 subunit can be combined to CHRNA2/alpha-2, CHRNA3/alpha-3 or CHRNA4/alpha-4, CHRNA5/alpha-5 and CHRNB3/beta-3 to give rise to functional receptors. Forms stoichiometries such as (CHRNA3)2:(CHRNB4)3 or (CHRNA3:CHRNB4)2:CHRNB3. Interacts with RIC3; which is required for proper folding and assembly. Interacts with LYPD6. Predominantly expressed by immature T-cells in the thymus.

It localises to the synaptic cell membrane. It is found in the cell membrane. It carries out the reaction K(+)(in) = K(+)(out). The enzyme catalyses Na(+)(in) = Na(+)(out). It catalyses the reaction Ca(2+)(in) = Ca(2+)(out). Its activity is regulated as follows. Activated by a myriad of ligands such as acetylcholine, cytisine, nicotine, choline and epibatidine. The heteropentamer CHRNA3:CHRNB4 activity is blocked by the alpha-conotoxin ImI and AuIB. In terms of biological role, component of neuronal acetylcholine receptors (nAChRs) that function as pentameric, ligand-gated cation channels with high calcium permeability among other activities. nAChRs are excitatory neurotrasnmitter receptors formed by a collection of nAChR subunits known to mediate synaptic transmission in the nervous system and the neuromuscular junction. Each nAchR subunit confers differential attributes to channel properties, including activation, deactivation and desensitization kinetics, pH sensitivity, cation permeability, and binding to allosteric modulators. CHRNB4 forms heteropentameric neuronal acetylcholine receptors with CHRNA2, CHRNA3 and CHRNA4, as well as CHRNA5 and CHRNB3 as accesory subunits. CHRNA3:CHRNB4 being predominant in neurons of the autonomic ganglia, it is known as ganglionic nicotinic receptor. CHRNA3:CHRNB4 or CHRNA3:CHRNA5:CHRNB4 play also an important role in the habenulo-interpeduncular tract, modulating the mesolimbic dopamine system and affecting reward circuits and addiction. Hypothalamic CHRNA3:CHRNB4 nAChR activation by nicotine leads to activation of POMC neurons and a decrease in food intake. The sequence is that of Neuronal acetylcholine receptor subunit beta-4 (Chrnb4) from Mus musculus (Mouse).